Here is a 320-residue protein sequence, read N- to C-terminus: Beta-carotene 3-hydroxylase, chloroplastic (320 aa).

A chloroplast-targeting transit peptide spans 1–78 (METQFLVSGR…EKELRGKLVV (78 aa)). The next 2 helical transmembrane spans lie at 118–138 (YLVAAVMSSFGITSMAVLSVY) and 152–172 (LSEMFGTFALSVGAAVGMEFW). The Fatty acid hydroxylase domain maps to 165 to 292 (AAVGMEFWAR…KFNGVPYGLF (128 aa)). The Histidine box-1 motif lies at 177 to 182 (HEALWH). The short motif at 189-193 (HESHH) is the Histidine box-2 element. 2 helical membrane-spanning segments follow: residues 204–224 (DIFAIINAVPAIALLSYGFFH) and 228–248 (IPGLCFGAGLGITVFGMAYMF). Positions 250–255 (HDGLVH) match the Histidine box-3 motif. A Histidine box-4 motif is present at residues 276 to 280 (HTLHH).

Belongs to the sterol desaturase family.

The protein localises to the plastid. It localises to the chloroplast membrane. The enzyme catalyses all-trans-beta-carotene + 4 reduced [2Fe-2S]-[ferredoxin] + 2 O2 + 4 H(+) = all-trans-zeaxanthin + 4 oxidized [2Fe-2S]-[ferredoxin] + 2 H2O. Functionally, nonheme diiron monooxygenase involved in the biosynthesis of xanthophylls. Specific for beta-ring hydroxylations of beta-carotene. Uses ferredoxin as an electron donor. The protein is Beta-carotene 3-hydroxylase, chloroplastic (BHY) of Gentiana lutea (Yellow gentian).